The primary structure comprises 512 residues: Glucagon-like peptide 2 receptor (512 aa).

Topologically, residues 1 to 135 (MRRLWGPGTP…KQNVDHYHHT (135 aa)) are extracellular. Disulfide bonds link C43–C65, C56–C97, and C78–C119. N73 carries an N-linked (GlcNAc...) asparagine glycan. Residues 136–160 (LLSTLQLMYTVGYSLSLISLFLALT) traverse the membrane as a helical segment. Topologically, residues 161-172 (LFLFLRKLHCTR) are cytoplasmic. Residues 173–197 (NYIHMNLFASFILRALVVLVKDMVF) traverse the membrane as a helical segment. At 198–223 (YNSYSRRPDSESGWMSYLSEISASCR) the chain is on the extracellular side. Residues 224 to 247 (SVQVLLHYFVGTNHLWLLVEGLYL) form a helical membrane-spanning segment. Residues 248-261 (HALLEPTVLPERRL) lie on the Cytoplasmic side of the membrane. The chain crosses the membrane as a helical span at residues 262 to 283 (WPKYLVVGWAFPMLFVIPWIFV). Over 284 to 301 (RASLENTGCWAVNENKKI) the chain is Extracellular. The helical transmembrane segment at 302-324 (WWIIRGPILLCVTVNFFIFLKIL) threads the bilayer. The Cytoplasmic segment spans residues 325–348 (KLLISKFRAHQMCFRDYKYRLAKS). A helical transmembrane segment spans residues 349-367 (TLLLILLMGVHEFLFTFFT). At 368–379 (DDQVQGFSRLIR) the chain is on the extracellular side. Residues 380-400 (LFIQLTLSSFHGFLVALQYGF) traverse the membrane as a helical segment. The Cytoplasmic portion of the chain corresponds to 401 to 512 (ASREVKAELR…MEEILEESEI (112 aa)). The tract at residues 458–494 (SGVSSHLTAGNLRDHGAQPHRGRGAWPRASSLSESSE) is disordered.

It belongs to the G-protein coupled receptor 2 family.

The protein resides in the cell membrane. Functionally, this is a receptor for glucagon-like peptide 2. The activity of this receptor is mediated by G proteins which activate adenylyl cyclase. In Mus musculus (Mouse), this protein is Glucagon-like peptide 2 receptor (Glp2r).